We begin with the raw amino-acid sequence, 473 residues long: ATP synthase subunit beta (473 aa).

158-165 (GGAGVGKT) lines the ATP pocket.

It belongs to the ATPase alpha/beta chains family. As to quaternary structure, F-type ATPases have 2 components, CF(1) - the catalytic core - and CF(0) - the membrane proton channel. CF(1) has five subunits: alpha(3), beta(3), gamma(1), delta(1), epsilon(1). CF(0) has three main subunits: a(1), b(2) and c(9-12). The alpha and beta chains form an alternating ring which encloses part of the gamma chain. CF(1) is attached to CF(0) by a central stalk formed by the gamma and epsilon chains, while a peripheral stalk is formed by the delta and b chains.

It localises to the cell membrane. It catalyses the reaction ATP + H2O + 4 H(+)(in) = ADP + phosphate + 5 H(+)(out). Its function is as follows. Produces ATP from ADP in the presence of a proton gradient across the membrane. The catalytic sites are hosted primarily by the beta subunits. This Geobacillus thermoleovorans (Bacillus thermoleovorans) protein is ATP synthase subunit beta.